The primary structure comprises 327 residues: Phosphate acyltransferase (327 aa).

This sequence belongs to the PlsX family. Homodimer. Probably interacts with PlsY.

It is found in the cytoplasm. The enzyme catalyses a fatty acyl-[ACP] + phosphate = an acyl phosphate + holo-[ACP]. It functions in the pathway lipid metabolism; phospholipid metabolism. Catalyzes the reversible formation of acyl-phosphate (acyl-PO(4)) from acyl-[acyl-carrier-protein] (acyl-ACP). This enzyme utilizes acyl-ACP as fatty acyl donor, but not acyl-CoA. This chain is Phosphate acyltransferase, found in Thermotoga maritima (strain ATCC 43589 / DSM 3109 / JCM 10099 / NBRC 100826 / MSB8).